A 498-amino-acid chain; its full sequence is POTE ankyrin domain family member A (498 aa).

5 ANK repeats span residues 98–127 (KKRTALHLACANGNSEVVSLLLDRQCQLHV), 131–160 (KKRTALIKAVQCQEDECALMLLQHGTDPNL), 164–193 (YGNTALHYAVYNEDKLMAKTLLLYGADIES), 197–226 (GGLTPLLLAVHGQKQRMVKFLIKKKANLNA), and 230–259 (FGRTALILAVRCGSASIVSLLLQQNIDVFS). Residues 289–410 (NQMPNNSSGN…SNEKNKVKSQ (122 aa)) are disordered. The segment covering 290 to 302 (QMPNNSSGNSNPE) has biased composition (polar residues). The segment covering 303–338 (QDLKLTSEEEPQRLKGSENSQHEKVTQEPDINKDCD) has biased composition (basic and acidic residues). Residues 348-359 (HGSNNVGLSENL) are compositionally biased toward polar residues. Residues 392 to 406 (EEYHRPEKKSNEKNK) show a composition bias toward basic and acidic residues. Residues 469–497 (EHLLELKNSHYEQLTVEVEQMENMVHVLQ) are a coiled coil.

This sequence belongs to the POTE family.

The sequence is that of POTE ankyrin domain family member A (POTEA) from Homo sapiens (Human).